We begin with the raw amino-acid sequence, 455 residues long: Bifunctional protein GlmU (455 aa).

Residues 1–227 (MDSLSIVILA…SWEAAGVNNK (227 aa)) are pyrophosphorylase. Residues 9 to 12 (LAAG), Lys23, Gln74, 79 to 80 (GT), 101 to 103 (YGD), Gly137, Glu152, Asn167, and Asn225 each bind UDP-N-acetyl-alpha-D-glucosamine. Asp103 is a binding site for Mg(2+). Position 225 (Asn225) interacts with Mg(2+). Residues 228-248 (VQLAELERILQANQARALLEA) are linker. An N-acetyltransferase region spans residues 249 to 455 (GVTLADPARI…GWKRPQKKSG (207 aa)). UDP-N-acetyl-alpha-D-glucosamine-binding residues include Arg331 and Lys349. The Proton acceptor role is filled by His361. UDP-N-acetyl-alpha-D-glucosamine is bound by residues Tyr364 and Asn375. Acetyl-CoA contacts are provided by residues Ala378, 384–385 (NY), Ser403, Ala421, and Arg438.

The protein in the N-terminal section; belongs to the N-acetylglucosamine-1-phosphate uridyltransferase family. This sequence in the C-terminal section; belongs to the transferase hexapeptide repeat family. Homotrimer. The cofactor is Mg(2+).

Its subcellular location is the cytoplasm. It carries out the reaction alpha-D-glucosamine 1-phosphate + acetyl-CoA = N-acetyl-alpha-D-glucosamine 1-phosphate + CoA + H(+). It catalyses the reaction N-acetyl-alpha-D-glucosamine 1-phosphate + UTP + H(+) = UDP-N-acetyl-alpha-D-glucosamine + diphosphate. It functions in the pathway nucleotide-sugar biosynthesis; UDP-N-acetyl-alpha-D-glucosamine biosynthesis; N-acetyl-alpha-D-glucosamine 1-phosphate from alpha-D-glucosamine 6-phosphate (route II): step 2/2. Its pathway is nucleotide-sugar biosynthesis; UDP-N-acetyl-alpha-D-glucosamine biosynthesis; UDP-N-acetyl-alpha-D-glucosamine from N-acetyl-alpha-D-glucosamine 1-phosphate: step 1/1. The protein operates within bacterial outer membrane biogenesis; LPS lipid A biosynthesis. Its function is as follows. Catalyzes the last two sequential reactions in the de novo biosynthetic pathway for UDP-N-acetylglucosamine (UDP-GlcNAc). The C-terminal domain catalyzes the transfer of acetyl group from acetyl coenzyme A to glucosamine-1-phosphate (GlcN-1-P) to produce N-acetylglucosamine-1-phosphate (GlcNAc-1-P), which is converted into UDP-GlcNAc by the transfer of uridine 5-monophosphate (from uridine 5-triphosphate), a reaction catalyzed by the N-terminal domain. This chain is Bifunctional protein GlmU, found in Chromobacterium violaceum (strain ATCC 12472 / DSM 30191 / JCM 1249 / CCUG 213 / NBRC 12614 / NCIMB 9131 / NCTC 9757 / MK).